A 120-amino-acid polypeptide reads, in one-letter code: Chaperonin GroEL (120 aa).

Aspartate 23–threonine 27 provides a ligand contact to ATP.

It belongs to the chaperonin (HSP60) family. Forms a cylinder of 14 subunits composed of two heptameric rings stacked back-to-back. Interacts with the co-chaperonin GroES.

The protein localises to the cytoplasm. The enzyme catalyses ATP + H2O + a folded polypeptide = ADP + phosphate + an unfolded polypeptide.. Together with its co-chaperonin GroES, plays an essential role in assisting protein folding. The GroEL-GroES system forms a nano-cage that allows encapsulation of the non-native substrate proteins and provides a physical environment optimized to promote and accelerate protein folding. This chain is Chaperonin GroEL, found in Mycobacterium kansasii.